Consider the following 85-residue polypeptide: Putative membrane protein insertion efficiency factor (85 aa).

The protein belongs to the UPF0161 family.

It localises to the cell inner membrane. In terms of biological role, could be involved in insertion of integral membrane proteins into the membrane. The chain is Putative membrane protein insertion efficiency factor from Serratia proteamaculans (strain 568).